A 763-amino-acid chain; its full sequence is Putative pentatricopeptide repeat-containing protein At1g74580 (763 aa).

PPR repeat units follow at residues 39-69 (TLSTYRSVIEKLGYYGKFEAMEEVLVDMREN), 75-109 (LEGVYVGAMKNYGRKGKVQEAVNVFERMDFYDCEP), 110-144 (TVFSYNAIMSVLVDSGYFDQAHKVYMRMRDRGITP), 145-179 (DVYSFTIRMKSFCKTSRPHAALRLLNNMSSQGCEM), 180-214 (NVVAYCTVVGGFYEENFKAEGYELFGKMLASGVSL), 215-249 (CLSTFNKLLRVLCKKGDVKECEKLLDKVIKRGVLP), 250-284 (NLFTYNLFIQGLCQRGELDGAVRMVGCLIEQGPKP), 285-319 (DVITYNNLIYGLCKNSKFQEAEVYLGKMVNEGLEP), 320-354 (DSYTYNTLIAGYCKGGMVQLAERIVGDAVFNGFVP), 355-389 (DQFTYRSLIDGLCHEGETNRALALFNEALGKGIKP), 390-424 (NVILYNTLIKGLSNQGMILEAAQLANEMSEKGLIP), 425-459 (EVQTFNILVNGLCKMGCVSDADGLVKVMISKGYFP), 460-494 (DIFTFNILIHGYSTQLKMENALEILDVMLDNGVDP), 495-529 (DVYTYNSLLNGLCKTSKFEDVMETYKTMVEKGCAP), 530-564 (NLFTFNILLESLCRYRKLDEALGLLEEMKNKSVNP), 565-595 (DAVTFGTLIDGFCKNGDLDGAYTLFRKMEEA), 601-635 (STPTYNIIIHAFTEKLNVTMAEKLFQEMVDRCLGP), 636-670 (DGYTYRLMVDGFCKTGNVNLGYKFLLEMMENGFIP), and 671-705 (SLTTLGRVINCLCVEDRVYEAAGIIHRMVQKGLVP).

This sequence belongs to the PPR family. P subfamily.

This chain is Putative pentatricopeptide repeat-containing protein At1g74580, found in Arabidopsis thaliana (Mouse-ear cress).